The primary structure comprises 475 residues: Ataxin-10 (475 aa).

Position 10 is an omega-N-methylarginine (Arg10). Ser12 and Ser77 each carry phosphoserine. Position 82 is a phosphothreonine (Thr82). Position 430 is a phosphoserine (Ser430).

The protein belongs to the ataxin-10 family. Homooligomer. Interacts with GNB2. Interacts with IQCB1. Interacts with OGT. Post-translationally, polyubiquitinated. Phosphorylation at Ser-12 by AURKB promotes the association of ATXN10 with PLK1. Phosphorylation at Ser-77 and Thr-82 by PLK1 may play a role in the regulation of cytokinesis and may stimulate the proteasome-mediated degradation of ATXN10.

The protein resides in the cytoplasm. It is found in the perinuclear region. Its subcellular location is the midbody. It localises to the cytoskeleton. The protein localises to the cilium basal body. The protein resides in the microtubule organizing center. It is found in the centrosome. Its subcellular location is the centriole. May play a role in the regulation of cytokinesis. May play a role in signaling by stimulating protein glycosylation. Induces neuritogenesis by activating the Ras-MAP kinase pathway and is necessary for the survival of cerebellar neurons. Does not appear to play a major role in ciliogenesis. In Macaca fascicularis (Crab-eating macaque), this protein is Ataxin-10 (ATXN10).